Consider the following 124-residue polypeptide: UPF0102 protein tll1737 (124 aa).

This sequence belongs to the UPF0102 family.

In Thermosynechococcus vestitus (strain NIES-2133 / IAM M-273 / BP-1), this protein is UPF0102 protein tll1737.